The primary structure comprises 699 residues: Dymeclin (699 aa).

G2 carries N-myristoyl glycine lipidation. The residue at position 346 (S346) is a Phosphoserine.

This sequence belongs to the dymeclin family.

The protein is Dymeclin of Drosophila melanogaster (Fruit fly).